A 205-amino-acid chain; its full sequence is Gap junction epsilon-1 protein (205 aa).

At 1–22 (MSLNYIKNFYEGCVKPPTVIGQ) the chain is on the cytoplasmic side. Residues 23–43 (FHTLFFGSVRMFFLGVLGFAV) form a helical membrane-spanning segment. Topologically, residues 44–74 (YGNEALHFSCDPDKREINLFCYNQFRPITPQ) are extracellular. Cystine bridges form between Cys-53–Cys-161 and Cys-64–Cys-147. The chain crosses the membrane as a helical span at residues 75–95 (VFWALQLVIVLLPGAIFHLYA). Topologically, residues 96–111 (ACKSINQDCILQKPVY) are cytoplasmic. A helical membrane pass occupies residues 112–132 (TVIYVLSVLLRISLEVFAFWL). The Extracellular segment spans residues 133 to 170 (QIHLFGFQVKPIYLCDTESLGKKPNILKCMVPEHFEKT). Residues 171–191 (IFLIAMYTFTVITMVLCVAEV) form a helical membrane-spanning segment. Residues 192–205 (FEIIFRRSCFLFKR) lie on the Cytoplasmic side of the membrane.

This sequence belongs to the connexin family. Beta-type (group I) subfamily. A connexon is composed of a hexamer of connexins. In terms of tissue distribution, highly expressed in lens, where it is mainly found in lens fibers and to a lesser extent in lens epithelium. Weakly expressed in retina. Not detected in other tissues tested.

The protein resides in the cell membrane. In terms of biological role, mediates calcium-independent ATP release, suggesting activity as a hemichannel. Does not form functional gap junctions. May play a non-essential role in eye lens development. The protein is Gap junction epsilon-1 protein of Mus musculus (Mouse).